A 298-amino-acid polypeptide reads, in one-letter code: Protease HtpX homolog (298 aa).

2 helical membrane passes run 5 to 25 (IFLFILTNILVLTTIGIVLSV) and 45 to 65 (MALLVFSLVVGFVGSFTSLAI). Residue His155 coordinates Zn(2+). The active site involves Glu156. His159 contacts Zn(2+). Transmembrane regions (helical) follow at residues 170 to 190 (LLQGIVNTFVVFLSRIAAWIA) and 204 to 224 (FIAMIIFQIVFSILGSLVVFA). Position 230 (Glu230) interacts with Zn(2+).

This sequence belongs to the peptidase M48B family. The cofactor is Zn(2+).

It is found in the cell membrane. The sequence is that of Protease HtpX homolog from Bacillus subtilis (strain 168).